The chain runs to 672 residues: Transcriptional regulator Kaiso (672 aa).

Positions 1–103 (MESRKLISAT…RSDLLDELIK (103 aa)) are interaction with NCOR1. Residues 1-136 (MESRKLISAT…SGTAQDGNTE (136 aa)) are self-association. Residues 32–94 (CDVTVIVEDR…IYSSKIVRVR (63 aa)) enclose the BTB domain. Glycyl lysine isopeptide (Lys-Gly) (interchain with G-Cter in SUMO2) cross-links involve residues lysine 151 and lysine 153. At threonine 251 the chain carries Phosphothreonine. Positions 298–573 (LPNHMPSSIN…FMSSHIKSVH (276 aa)) are interaction with CBFA2T3. The segment at 325–354 (KANEEEEEEIIDDDDDTISSSPDSAVSNTS) is disordered. Acidic residues predominate over residues 328–341 (EEEEEEIIDDDDDT). Residues lysine 390, lysine 407, lysine 414, lysine 449, lysine 465, lysine 474, and lysine 479 each participate in a glycyl lysine isopeptide (Lys-Gly) (interchain with G-Cter in SUMO2) cross-link. The tract at residues 454-672 (EGEARLENEI…EFEFIIPESY (219 aa)) is interaction with CTNND1. The Nuclear localization signal signature appears at 471–480 (MANKRMKVKH). C2H2-type zinc fingers lie at residues 494 to 516 (YICI…FNIH), 522 to 544 (YPCR…EIHH), and 550 to 573 (YQCL…KSVH). The tract at residues 514–638 (NIHSWEKKYP…TTTSTQNKPM (125 aa)) is required for DNA-binding. Glycyl lysine isopeptide (Lys-Gly) (interchain with G-Cter in SUMO2) cross-links involve residues lysine 539, lysine 570, lysine 582, lysine 611, and lysine 618. A disordered region spans residues 616–635 (GYKVDTGKEPPVGTTTSTQN).

Self-associates. Interacts with CTNND2. Interacts with CTNND1, and this interaction inhibits binding to both methylated and non-methylated DNA. Interacts with NCOR1. Interacts with KPNA2/RCH1, which may mediate nuclear import of this protein. Interacts with CBFA2T3. Expressed in vascular endothelium.

It is found in the nucleus. Its subcellular location is the cytoplasm. Functionally, transcriptional regulator with bimodal DNA-binding specificity. Binds to methylated CpG dinucleotides in the consensus sequence 5'-CGCG-3' and also binds to the non-methylated consensus sequence 5'-CTGCNA-3' also known as the consensus kaiso binding site (KBS). Recruits the N-CoR repressor complex to promote histone deacetylation and the formation of repressive chromatin structures in target gene promoters. May contribute to the repression of target genes of the Wnt signaling pathway. May also activate transcription of a subset of target genes by the recruitment of CTNND2. Represses expression of MMP7 in conjunction with transcriptional corepressors CBFA2T3, CBFA2T2 and RUNX1T1. This Homo sapiens (Human) protein is Transcriptional regulator Kaiso (ZBTB33).